The primary structure comprises 275 residues: Undecaprenyl-diphosphatase (275 aa).

A run of 8 helical transmembrane segments spans residues 4-24, 44-64, 85-105, 113-133, 149-169, 188-208, 226-246, and 255-275; these read LNVI…WLPI, AFMD…VVVL, WTLW…GFPL, LMQN…FIVI, TLPW…IIPG, FVGA…VSIL, IILL…IKFL, and FKVF…AMFL.

This sequence belongs to the UppP family.

It localises to the cell membrane. It catalyses the reaction di-trans,octa-cis-undecaprenyl diphosphate + H2O = di-trans,octa-cis-undecaprenyl phosphate + phosphate + H(+). Functionally, catalyzes the dephosphorylation of undecaprenyl diphosphate (UPP). Confers resistance to bacitracin. The sequence is that of Undecaprenyl-diphosphatase from Latilactobacillus sakei subsp. sakei (strain 23K) (Lactobacillus sakei subsp. sakei).